A 203-amino-acid chain; its full sequence is Translation initiation factor IF-3 (203 aa).

This sequence belongs to the IF-3 family. In terms of assembly, monomer.

Its subcellular location is the cytoplasm. Functionally, IF-3 binds to the 30S ribosomal subunit and shifts the equilibrium between 70S ribosomes and their 50S and 30S subunits in favor of the free subunits, thus enhancing the availability of 30S subunits on which protein synthesis initiation begins. This chain is Translation initiation factor IF-3, found in Corynebacterium efficiens (strain DSM 44549 / YS-314 / AJ 12310 / JCM 11189 / NBRC 100395).